Here is a 428-residue protein sequence, read N- to C-terminus: D-amino acid dehydrogenase (428 aa).

3–17 is an FAD binding site; that stretch reads VVVLGSGVVGVASAY.

The protein belongs to the DadA oxidoreductase family. Requires FAD as cofactor.

It catalyses the reaction a D-alpha-amino acid + A + H2O = a 2-oxocarboxylate + AH2 + NH4(+). It functions in the pathway amino-acid degradation; D-alanine degradation; NH(3) and pyruvate from D-alanine: step 1/1. Functionally, oxidative deamination of D-amino acids. The sequence is that of D-amino acid dehydrogenase from Burkholderia ambifaria (strain MC40-6).